Here is a 184-residue protein sequence, read N- to C-terminus: Probable chemoreceptor glutamine deamidase CheD (184 aa).

The protein belongs to the CheD family.

The catalysed reaction is L-glutaminyl-[protein] + H2O = L-glutamyl-[protein] + NH4(+). In terms of biological role, probably deamidates glutamine residues to glutamate on methyl-accepting chemotaxis receptors (MCPs), playing an important role in chemotaxis. This chain is Probable chemoreceptor glutamine deamidase CheD, found in Rhizobium johnstonii (strain DSM 114642 / LMG 32736 / 3841) (Rhizobium leguminosarum bv. viciae).